Here is a 352-residue protein sequence, read N- to C-terminus: Bifunctional protein FolD 1, mitochondrial (352 aa).

Residues 1-23 (MLMIARKALASAHTKAFRLATRD) constitute a mitochondrion transit peptide.

Belongs to the tetrahydrofolate dehydrogenase/cyclohydrolase family. In terms of assembly, homodimer.

It is found in the mitochondrion. It carries out the reaction (6R)-5,10-methylene-5,6,7,8-tetrahydrofolate + NADP(+) = (6R)-5,10-methenyltetrahydrofolate + NADPH. The enzyme catalyses (6R)-5,10-methenyltetrahydrofolate + H2O = (6R)-10-formyltetrahydrofolate + H(+). It functions in the pathway one-carbon metabolism; tetrahydrofolate interconversion. Functionally, catalyzes the oxidation of 5,10-methylenetetrahydrofolate to 5,10-methenyltetrahydrofolate and then the hydrolysis of 5,10-methenyltetrahydrofolate to 10-formyltetrahydrofolate. In Arabidopsis thaliana (Mouse-ear cress), this protein is Bifunctional protein FolD 1, mitochondrial (FOLD1).